The sequence spans 257 residues: Probable amino-acid ABC transporter ATP-binding protein HI_1078 (257 aa).

An ABC transporter domain is found at 4-244 (LKVSNIQKNF…PQHERTKQFL (241 aa)). 36 to 43 (GPSGSGKT) contacts ATP.

It belongs to the ABC transporter superfamily.

It localises to the cell inner membrane. Functionally, probably part of a binding-protein-dependent transport system for an amino acid. Probably responsible for energy coupling to the transport system. The polypeptide is Probable amino-acid ABC transporter ATP-binding protein HI_1078 (Haemophilus influenzae (strain ATCC 51907 / DSM 11121 / KW20 / Rd)).